We begin with the raw amino-acid sequence, 50 residues long: Photosystem II reaction center protein M (50 aa).

Residues Phe6–Phe26 traverse the membrane as a helical segment.

It belongs to the PsbM family. PSII is composed of 1 copy each of membrane proteins PsbA, PsbB, PsbC, PsbD, PsbE, PsbF, PsbH, PsbI, PsbJ, PsbK, PsbL, PsbM, PsbT, PsbX, PsbY, Psb30/Ycf12, peripheral proteins PsbO, CyanoQ (PsbQ), PsbU, PsbV and a large number of cofactors. It forms dimeric complexes.

The protein localises to the cellular thylakoid membrane. Its function is as follows. One of the components of the core complex of photosystem II (PSII). PSII is a light-driven water:plastoquinone oxidoreductase that uses light energy to abstract electrons from H(2)O, generating O(2) and a proton gradient subsequently used for ATP formation. It consists of a core antenna complex that captures photons, and an electron transfer chain that converts photonic excitation into a charge separation. This subunit is found at the monomer-monomer interface. This chain is Photosystem II reaction center protein M, found in Prochlorococcus marinus (strain MIT 9215).